Here is a 317-residue protein sequence, read N- to C-terminus: COP9 signalosome complex subunit 6b (317 aa).

Residues 11-164 enclose the MPN domain; sequence FKLHPLVMLN…VTIYESEFHV (154 aa).

Belongs to the peptidase M67A family. CSN6 subfamily. As to quaternary structure, component of the CSN complex, probably composed of CSN1, CSN2, CSN3, CSN4, CSN5 (CSN5A or CSN5B), CSN6 (CSN6A or CSN6B), CSN7 and CSN8. Interacts with itself. In the complex, it probably interacts directly with CSN4, CSN5A or CSN5B, and CSN7. Binds to the translation initiation factors TIF3E1.

The protein resides in the cytoplasm. It localises to the nucleus. Component of the COP9 signalosome complex (CSN), a complex involved in various cellular and developmental processes such as photomorphogenesis and auxin and jasmonate responses. The CSN complex is an essential regulator of the ubiquitin (Ubl) conjugation pathway by mediating the deneddylation of the cullin subunits of SCF-type E3 ligase complexes, leading to decrease the Ubl ligase activity of SCF. It is involved in repression of photomorphogenesis in darkness by regulating the activity of COP1-containing Ubl ligase complexes. The complex is also required for degradation of PSIAA6 by regulating the activity of the Ubl ligase SCF-TIR complex. Essential for the structural integrity of the CSN holocomplex. The protein is COP9 signalosome complex subunit 6b of Arabidopsis thaliana (Mouse-ear cress).